Consider the following 399-residue polypeptide: Phosphopentomutase (399 aa).

Residues Asp10, Asp296, His301, Asp337, His338, and His349 each contribute to the Mn(2+) site.

This sequence belongs to the phosphopentomutase family. Requires Mn(2+) as cofactor.

The protein localises to the cytoplasm. It carries out the reaction 2-deoxy-alpha-D-ribose 1-phosphate = 2-deoxy-D-ribose 5-phosphate. It catalyses the reaction alpha-D-ribose 1-phosphate = D-ribose 5-phosphate. Its pathway is carbohydrate degradation; 2-deoxy-D-ribose 1-phosphate degradation; D-glyceraldehyde 3-phosphate and acetaldehyde from 2-deoxy-alpha-D-ribose 1-phosphate: step 1/2. Functionally, isomerase that catalyzes the conversion of deoxy-ribose 1-phosphate (dRib-1-P) and ribose 1-phosphate (Rib-1-P) to deoxy-ribose 5-phosphate (dRib-5-P) and ribose 5-phosphate (Rib-5-P), respectively. The chain is Phosphopentomutase from Idiomarina loihiensis (strain ATCC BAA-735 / DSM 15497 / L2-TR).